We begin with the raw amino-acid sequence, 305 residues long: Serine/threonine-protein phosphatase PP-X isozyme 2 (305 aa).

Positions 51, 53, 79, and 111 each coordinate Mn(2+). His112 functions as the Proton donor in the catalytic mechanism. 2 residues coordinate Mn(2+): His161 and His236.

Belongs to the PPP phosphatase family. PP-4 (PP-X) subfamily. The cofactor is Mn(2+). In terms of tissue distribution, ubiquitous, mostly expressed in root mersitems, flowers, and vascular tissues.

The protein resides in the plastid stroma. It carries out the reaction O-phospho-L-seryl-[protein] + H2O = L-seryl-[protein] + phosphate. The catalysed reaction is O-phospho-L-threonyl-[protein] + H2O = L-threonyl-[protein] + phosphate. The polypeptide is Serine/threonine-protein phosphatase PP-X isozyme 2 (PPX2) (Arabidopsis thaliana (Mouse-ear cress)).